Here is a 78-residue protein sequence, read N- to C-terminus: Cytochrome c oxidase subunit 6b-3 (78 aa).

The region spanning 22-65 (TRHCFTRYIEFHRCTTAKGEDANECERFAKYYRALCPGEWVDKW) is the CHCH domain. The Cx9C motif signature appears at 25–35 (CFTRYIEFHRC). 2 cysteine pairs are disulfide-bonded: cysteine 25–cysteine 57 and cysteine 35–cysteine 46. A Cx10C motif motif is present at residues 46–57 (CERFAKYYRALC).

The protein belongs to the cytochrome c oxidase subunit 6B (TC 3.D.4.8) family. In terms of tissue distribution, expressed in the whole plant.

Its subcellular location is the mitochondrion. In terms of biological role, this protein is one of the nuclear-coded polypeptide chains of cytochrome c oxidase, the terminal oxidase in mitochondrial electron transport. This protein may be one of the heme-binding subunits of the oxidase. The protein is Cytochrome c oxidase subunit 6b-3 (COX6B-3) of Arabidopsis thaliana (Mouse-ear cress).